Here is a 458-residue protein sequence, read N- to C-terminus: GTPase Der (458 aa).

2 EngA-type G domains span residues 3–167 (PVVV…PETE) and 176–351 (IKLA…AQYT). GTP-binding positions include 9–16 (GRPNVGKS), 56–60 (DTGGF), 119–122 (NKID), 182–189 (GRPNVGKS), 229–233 (DTAGL), and 294–297 (NKWD). The 85-residue stretch at 352 to 436 (FNIKTGELNN…PIRLFFREKP (85 aa)) folds into the KH-like domain.

Belongs to the TRAFAC class TrmE-Era-EngA-EngB-Septin-like GTPase superfamily. EngA (Der) GTPase family. Associates with the 50S ribosomal subunit.

Functionally, GTPase that plays an essential role in the late steps of ribosome biogenesis. The chain is GTPase Der from Desulfosudis oleivorans (strain DSM 6200 / JCM 39069 / Hxd3) (Desulfococcus oleovorans).